A 652-amino-acid polypeptide reads, in one-letter code: MNAAIPNQAAKFLAATAHVDEAAVQPLPNSRKIYVEGSTPDIRVPMREIRQADTPLMFSGEAGTGAERSEPNPPIFVYDCSGPYTDPAAKIDIREGLPALRTKWIEARGDTEVLRDLSSEYGRQQAANPELATMRFPGLHRHPRRAKAGMNVTQMHYARQGIITPEMEFIAIRENNNRAAYLESLRASGPQGAKLAALMSRQHPGQNFGANLQGEITPEFVRDEVARGRAIIPNNINHPESEPMIIGRNFLVKINANIGNSALGSSIQEEVEKMTWAIRWGGDTVMDLSTGKNIHETREWIIRNSPVPIGTVPIYQALEKVDGKAEELTWEMFRDTLVEQAEQGVDYFTIHAGVLLRYVPMTANRMTGIVSRGGSIMAKWCLAHHKESFLYTHFEEICEIMKAYDVAFSLGDGLRPGSIYDANDEAQLSELRTLGELTQVAWKHDVQVMIEGPGHVPMQLIKENMDIQLESCSEAPFYTLGPLTTDIAPGYDHITSGIGAAMIGWYGTAMLCYVTPKEHLGLPDKDDVKEGIITYKLAAHAADLAKGHPGAQIRDNALSKARFEFRWDDQFNLGLDPDKAKSFHDETLPKESAKVAHFCSMCGPHFCSMKITQDVREFAAKEGLNEADALARGMEVKAVEFVKQGAEVYRKV.

Substrate contacts are provided by residues asparagine 257, methionine 286, tyrosine 315, histidine 351, 371-373 (SRG), 412-415 (DGLR), and glutamate 451. Residue histidine 455 participates in Zn(2+) binding. A substrate-binding site is contributed by tyrosine 478. Position 519 (histidine 519) interacts with Zn(2+). 3 residues coordinate [4Fe-4S] cluster: cysteine 599, cysteine 602, and cysteine 607.

This sequence belongs to the ThiC family. In terms of assembly, homodimer. The cofactor is [4Fe-4S] cluster.

The enzyme catalyses 5-amino-1-(5-phospho-beta-D-ribosyl)imidazole + S-adenosyl-L-methionine = 4-amino-2-methyl-5-(phosphooxymethyl)pyrimidine + CO + 5'-deoxyadenosine + formate + L-methionine + 3 H(+). It functions in the pathway cofactor biosynthesis; thiamine diphosphate biosynthesis. In terms of biological role, catalyzes the synthesis of the hydroxymethylpyrimidine phosphate (HMP-P) moiety of thiamine from aminoimidazole ribotide (AIR) in a radical S-adenosyl-L-methionine (SAM)-dependent reaction. This is Phosphomethylpyrimidine synthase from Thiobacillus denitrificans (strain ATCC 25259 / T1).